We begin with the raw amino-acid sequence, 367 residues long: Ferrochelatase (367 aa).

Fe cation-binding residues include His213 and Glu294.

Belongs to the ferrochelatase family.

The protein resides in the cytoplasm. It catalyses the reaction heme b + 2 H(+) = protoporphyrin IX + Fe(2+). Its pathway is porphyrin-containing compound metabolism; protoheme biosynthesis; protoheme from protoporphyrin-IX: step 1/1. Its function is as follows. Catalyzes the ferrous insertion into protoporphyrin IX. In Dechloromonas aromatica (strain RCB), this protein is Ferrochelatase.